Consider the following 348-residue polypeptide: Dihydroorotase (348 aa).

Zn(2+)-binding residues include His17 and His19. Substrate contacts are provided by residues 19–21 (HLR) and Asn45. The Zn(2+) site is built by Lys103, His140, and His178. An N6-carboxylysine modification is found at Lys103. His140 is a substrate binding site. Leu223 provides a ligand contact to substrate. Asp251 lines the Zn(2+) pocket. Asp251 is an active-site residue. Residues His255 and Ala267 each contribute to the substrate site.

This sequence belongs to the metallo-dependent hydrolases superfamily. DHOase family. Class II DHOase subfamily. As to quaternary structure, homodimer. It depends on Zn(2+) as a cofactor.

The catalysed reaction is (S)-dihydroorotate + H2O = N-carbamoyl-L-aspartate + H(+). The protein operates within pyrimidine metabolism; UMP biosynthesis via de novo pathway; (S)-dihydroorotate from bicarbonate: step 3/3. Catalyzes the reversible cyclization of carbamoyl aspartate to dihydroorotate. The sequence is that of Dihydroorotase from Salmonella dublin (strain CT_02021853).